A 415-amino-acid chain; its full sequence is ATP-dependent Clp protease ATP-binding subunit ClpX (415 aa).

The ClpX-type ZB domain maps to 1–54 (MARNRMGGALICSFCNKPESSERFVVPGPGGIAICDRCVDLCESYIKSYKTVRP). Zn(2+) contacts are provided by cysteine 12, cysteine 15, cysteine 35, and cysteine 38. ATP is bound at residue 117–124 (PTGSGKTL).

It belongs to the ClpX chaperone family. Component of the ClpX-ClpP complex. Forms a hexameric ring that, in the presence of ATP, binds to fourteen ClpP subunits assembled into a disk-like structure with a central cavity, resembling the structure of eukaryotic proteasomes.

Its function is as follows. ATP-dependent specificity component of the Clp protease. It directs the protease to specific substrates. Can perform chaperone functions in the absence of ClpP. This Treponema denticola (strain ATCC 35405 / DSM 14222 / CIP 103919 / JCM 8153 / KCTC 15104) protein is ATP-dependent Clp protease ATP-binding subunit ClpX.